The sequence spans 350 residues: Renin receptor (350 aa).

The signal sequence occupies residues 1-17; the sequence is MAVLVVLLSSLVSSALA. Residues 18–302 are Extracellular-facing; the sequence is NEFSILRSPG…YNLAYKYNLE (285 aa). Residues 303 to 323 traverse the membrane as a helical segment; it reads YSVVFNLVLWIMTGLALAVII. Over 324–350 the chain is Cytoplasmic; it reads TSYNIWNMDPGYDSIIYRMTNQKIRMD. Positions 346–350 match the Mediates retrograde transport to the ER motif; sequence KIRMD.

Interacts with renin. Accessory component of the multisubunit proton-transporting vacuolar (V)-ATPase protein pump. Interacts (via N-terminus) with ATP6AP1 (via N-terminus). Interacts with ATP6V0D1; ATP6V0D1 is a V-ATPase complex subunit and the interaction promotes V-ATPase complex assembly. Interacts with TMEM9; TMEM9 is a V-ATPase assembly regulator and the interaction induces the interaction with ATP6V0D1. Interacts with VMA21 (via N-terminus); VMA21 is a V-ATPase accessory component. Post-translationally, phosphorylated. In terms of processing, proteolytically cleaved by a furin-like convertase in the trans-Golgi network to generate N- and C-terminal fragments. As to expression, expressed in the brain.

Its subcellular location is the endoplasmic reticulum membrane. The protein localises to the lysosome membrane. It is found in the cytoplasmic vesicle. It localises to the autophagosome membrane. The protein resides in the cell projection. Its subcellular location is the dendritic spine membrane. The protein localises to the axon. It is found in the endosome membrane. It localises to the clathrin-coated vesicle membrane. The protein resides in the secretory vesicle. Its subcellular location is the synaptic vesicle membrane. Multifunctional protein which functions as a renin, prorenin cellular receptor and is involved in the assembly of the lysosomal proton-transporting V-type ATPase (V-ATPase) and the acidification of the endo-lysosomal system. May mediate renin-dependent cellular responses by activating ERK1 and ERK2. By increasing the catalytic efficiency of renin in AGT/angiotensinogen conversion to angiotensin I, may also play a role in the renin-angiotensin system (RAS). Through its function in V-type ATPase (v-ATPase) assembly and acidification of the lysosome it regulates protein degradation and may control different signaling pathways important for proper brain development, synapse morphology and synaptic transmission. This is Renin receptor (Atp6ap2) from Rattus norvegicus (Rat).